The chain runs to 336 residues: UPF0324 membrane protein SP_0034 (336 aa).

8 helical membrane-spanning segments follow: residues 65–84, 91–113, 118–140, 153–175, 211–233, 249–271, 286–305, and 312–334; these read LLQY…QVFA, PVIL…FFAL, ATLV…APVI, VIFF…LHLS, SATI…LSYW, VFPL…TSLG, FLIV…VAMV, and ILLG…TLIG.

This sequence belongs to the UPF0324 family.

The protein localises to the cell membrane. This is UPF0324 membrane protein SP_0034 from Streptococcus pneumoniae serotype 4 (strain ATCC BAA-334 / TIGR4).